The chain runs to 316 residues: tRNA dimethylallyltransferase (316 aa).

17–24 provides a ligand contact to ATP; that stretch reads GPTASGKT. 19–24 is a binding site for substrate; it reads TASGKT. 3 interaction with substrate tRNA regions span residues 42–45, 166–170, and 247–252; these read DSAL, QRLSR, and RCVGYR.

Belongs to the IPP transferase family. In terms of assembly, monomer. Mg(2+) is required as a cofactor.

The catalysed reaction is adenosine(37) in tRNA + dimethylallyl diphosphate = N(6)-dimethylallyladenosine(37) in tRNA + diphosphate. In terms of biological role, catalyzes the transfer of a dimethylallyl group onto the adenine at position 37 in tRNAs that read codons beginning with uridine, leading to the formation of N6-(dimethylallyl)adenosine (i(6)A). This is tRNA dimethylallyltransferase from Citrobacter koseri (strain ATCC BAA-895 / CDC 4225-83 / SGSC4696).